The sequence spans 280 residues: Serine protease 33 (280 aa).

Residues M1–G22 form the signal peptide. Residues I37–S279 form the Peptidase S1 domain. C62 and C78 are disulfide-bonded. Catalysis depends on charge relay system residues H77 and D126. Disulfide bonds link C160–C237, C193–C216, and C227–C255. Catalysis depends on S231, which acts as the Charge relay system.

This sequence belongs to the peptidase S1 family. In terms of tissue distribution, predominantly expressed in macrophages. Present in the spleen, small and large intestine, lung and brain (at protein level). Highly expressed in peripheral leukocytes, ovary, retina, spleen and stomach. Moderately expressed in thymus, uterus and platelets, as well as some brain tissues, such as thalamus and fetal brain.

The protein localises to the secreted. Its function is as follows. Serine protease that has amidolytic activity, cleaving its substrates before Arg residues. This is Serine protease 33 (PRSS33) from Homo sapiens (Human).